The chain runs to 54 residues: Ovomucoid (54 aa).

One can recognise a Kazal-like domain in the interval 4 to 54 (VDCSEYPKPACTLEHRPLCGSDNKTYGNKCNFCNAVVESNGTLTLSHFGKC). 3 disulfides stabilise this stretch: Cys6-Cys36, Cys14-Cys33, and Cys22-Cys54. Asn43 is a glycosylation site (N-linked (GlcNAc...) asparagine).

The protein localises to the secreted. This is Ovomucoid from Pavo muticus (Green peafowl).